The primary structure comprises 688 residues: Glycine--tRNA ligase beta subunit (688 aa).

The protein belongs to the class-II aminoacyl-tRNA synthetase family. Tetramer of two alpha and two beta subunits.

It localises to the cytoplasm. The catalysed reaction is tRNA(Gly) + glycine + ATP = glycyl-tRNA(Gly) + AMP + diphosphate. This chain is Glycine--tRNA ligase beta subunit (glyS), found in Haemophilus influenzae (strain ATCC 51907 / DSM 11121 / KW20 / Rd).